A 255-amino-acid polypeptide reads, in one-letter code: Putative enoyl-CoA hydratase/isomerase YhaR (255 aa).

2 helical membrane-spanning segments follow: residues 96–116 (VTIAAIHGAAAGLGLSLALCA) and 126–146 (VLAMNFIGIGLVPDGGGHYLL).

It belongs to the enoyl-CoA hydratase/isomerase family.

It is found in the cell membrane. The sequence is that of Putative enoyl-CoA hydratase/isomerase YhaR (yhaR) from Bacillus subtilis (strain 168).